The sequence spans 181 residues: Ribonuclease HII (181 aa).

The RNase H type-2 domain maps to 1–181 (MICGIDEVGR…SLHRKSFQLI (181 aa)). Residues D6, E7, and D98 each coordinate a divalent metal cation.

It belongs to the RNase HII family. The cofactor is Mn(2+). Mg(2+) serves as cofactor.

It is found in the cytoplasm. The enzyme catalyses Endonucleolytic cleavage to 5'-phosphomonoester.. Functionally, endonuclease that specifically degrades the RNA of RNA-DNA hybrids. The polypeptide is Ribonuclease HII (Borrelia duttonii (strain Ly)).